We begin with the raw amino-acid sequence, 92 residues long: MANTPSAKKRAKQAEKRRSHNASLRSMVRTYIKNVVKAIDAKDAEKAQAAYVLAVPVIDRMADKGIIHKNKAARHKGRLNGHIKALSLAAAA.

Residues 1 to 23 (MANTPSAKKRAKQAEKRRSHNAS) are disordered. Positions 7-20 (AKKRAKQAEKRRSH) are enriched in basic residues.

The protein belongs to the bacterial ribosomal protein bS20 family.

Functionally, binds directly to 16S ribosomal RNA. In Pseudomonas savastanoi pv. phaseolicola (strain 1448A / Race 6) (Pseudomonas syringae pv. phaseolicola (strain 1448A / Race 6)), this protein is Small ribosomal subunit protein bS20.